We begin with the raw amino-acid sequence, 147 residues long: Ubiquitin-conjugating enzyme E2 D4 (147 aa).

The 147-residue stretch at 1-147 (MALKRIQKEL…AREWTQKYAM (147 aa)) folds into the UBC core domain. The active-site Glycyl thioester intermediate is the Cys-85.

Belongs to the ubiquitin-conjugating enzyme family. Interacts with map3k10/mlk2. In terms of tissue distribution, at embryonic stages 28 to 35, expressed in the somites, eye primordia, otic vesicle and branchial arches. By stage 35, also weakly expressed in the pronephros.

It carries out the reaction S-ubiquitinyl-[E1 ubiquitin-activating enzyme]-L-cysteine + [E2 ubiquitin-conjugating enzyme]-L-cysteine = [E1 ubiquitin-activating enzyme]-L-cysteine + S-ubiquitinyl-[E2 ubiquitin-conjugating enzyme]-L-cysteine.. The protein operates within protein modification; protein ubiquitination. In terms of biological role, catalyzes the covalent attachment of ubiquitin to other proteins. Regulates pronephros development, possibly by promoting ubiquitination and thus inactivation or degradation of map3k10/mlk2. This is Ubiquitin-conjugating enzyme E2 D4 (ube2d4) from Xenopus laevis (African clawed frog).